The chain runs to 547 residues: Chaperonin GroEL (547 aa).

ATP is bound by residues 30–33 (TLGP), K51, 87–91 (DGTTT), G415, and D496. The segment at 527–547 (SDKAEPMPMRGGMGGMGGMDF) is disordered. The segment covering 537-547 (GGMGGMGGMDF) has biased composition (gly residues).

The protein belongs to the chaperonin (HSP60) family. As to quaternary structure, forms a cylinder of 14 subunits composed of two heptameric rings stacked back-to-back. Interacts with the co-chaperonin GroES.

The protein localises to the cytoplasm. It catalyses the reaction ATP + H2O + a folded polypeptide = ADP + phosphate + an unfolded polypeptide.. In terms of biological role, together with its co-chaperonin GroES, plays an essential role in assisting protein folding. The GroEL-GroES system forms a nano-cage that allows encapsulation of the non-native substrate proteins and provides a physical environment optimized to promote and accelerate protein folding. The chain is Chaperonin GroEL from Rickettsia rickettsii (strain Sheila Smith).